Consider the following 912-residue polypeptide: Alpha-actinin-4 (912 aa).

The tract at residues 1-267 (MVDYHAANQA…IMTYVSSFYH (267 aa)) is actin-binding. The interval 12–27 (QYGPNSGGGNGAGGGG) is interaction with VCL. The tract at residues 12-31 (QYGPNSGGGNGAGGGGSMGD) is disordered. Residues 16 to 29 (NSGGGNGAGGGGSM) show a composition bias toward gly residues. Tyr-32 is subject to Phosphotyrosine. An interaction with VCL region spans residues 41 to 62 (RDLLLDPAWEKQQRKTFTAWCN). 2 Calponin-homology (CH) domains span residues 51–155 (KQQR…LRFA) and 164–270 (TSAK…HAFS). An LXXLL motif motif is present at residues 85 to 89 (LMLLL). The interval 109–127 (KINNVNKALDFIASKGVKL) is interaction with VCL. Lys-115 bears the N6-acetyllysine mark. The polyphosphoinositide (PIP2)-binding stretch occupies residues 178–193 (TAPYKNVNVQNFHISW). Lys-215 is modified (N6-acetyllysine). Thr-250 bears the Phosphothreonine mark. Spectrin repeat units lie at residues 294–404 (HLME…WLLN), 414–519 (HLAE…ALEK), 529–640 (QLHL…ALLE), and 650–753 (HLRR…EVEN). N6-acetyllysine is present on residues Lys-593 and Lys-626. At Ser-697 the chain carries Phosphoserine. The tract at residues 737 to 912 (WEQLLTTIAR…STALYGESDL (176 aa)) is mediates interaction with MICALL2. EF-hand domains follow at residues 766 to 801 (EQMQEFRASFNHFDKDHGGALGPEEFKACLISLGYD) and 807 to 842 (QGDAEFNRIMSVVDPNHSGLVTFQAFIDFMSRETTD). Ca(2+) is bound at residue Asp-779. Lys-780 carries the N6-acetyllysine modification. Ca(2+) is bound by residues Asp-781 and Glu-790. An N6-acetyllysine modification is found at Lys-860. Ser-910 carries the post-translational modification Phosphoserine.

It belongs to the alpha-actinin family. Homodimer; antiparallel. Interacts with MAGI1. Interacts with PDLIM2. Identified in a complex with CASK, IQGAP1, MAGI2, NPHS1, SPTAN1 and SPTBN1. Identified in a IGF2BP1-dependent mRNP granule complex containing untranslated mRNAs. Component of the CART complex, at least composed of ACTN4, HGS/HRS, MYO5B and TRIM3. Binds TRIM3 at the N-terminus. Interacts with MICALL2 (preferentially in opened conformation); stimulated by RAB13 activation. Interacts with PPARG and RARA. Binds to VCL; this interaction triggers VCL conformational changes. Interacts with SEPTIN14. Interacts with IGSF8.

It localises to the nucleus. The protein resides in the cytoplasm. Its subcellular location is the cell junction. It is found in the cytoskeleton. The protein localises to the stress fiber. It localises to the perinuclear region. Functionally, F-actin cross-linking protein which is thought to anchor actin to a variety of intracellular structures. This is a bundling protein. Probably involved in vesicular trafficking via its association with the CART complex. The CART complex is necessary for efficient transferrin receptor recycling but not for EGFR degradation. Involved in tight junction assembly in epithelial cells probably through interaction with MICALL2. Links MICALL2 to the actin cytoskeleton and recruits it to the tight junctions. May also function as a transcriptional coactivator, stimulating transcription mediated by the nuclear hormone receptors PPARG and RARA. Association with IGSF8 regulates the immune synapse formation and is required for efficient T-cell activation. The sequence is that of Alpha-actinin-4 from Mus musculus (Mouse).